A 341-amino-acid chain; its full sequence is N-acetyl-gamma-glutamyl-phosphate reductase (341 aa).

C149 is a catalytic residue.

This sequence belongs to the NAGSA dehydrogenase family. Type 1 subfamily.

It localises to the cytoplasm. It catalyses the reaction N-acetyl-L-glutamate 5-semialdehyde + phosphate + NADP(+) = N-acetyl-L-glutamyl 5-phosphate + NADPH + H(+). It functions in the pathway amino-acid biosynthesis; L-arginine biosynthesis; N(2)-acetyl-L-ornithine from L-glutamate: step 3/4. In terms of biological role, catalyzes the NADPH-dependent reduction of N-acetyl-5-glutamyl phosphate to yield N-acetyl-L-glutamate 5-semialdehyde. The chain is N-acetyl-gamma-glutamyl-phosphate reductase from Methanocaldococcus jannaschii (strain ATCC 43067 / DSM 2661 / JAL-1 / JCM 10045 / NBRC 100440) (Methanococcus jannaschii).